The primary structure comprises 837 residues: Striatin-interacting protein 1 (837 aa).

An N-acetylmethionine modification is found at M1. Disordered regions lie at residues 1-67 (MEPA…ESPD) and 333-423 (AASP…KGLP). The span at 18-35 (PQPPPPPPPATAQPPPGA) shows a compositional bias: pro residues. The span at 47 to 60 (KAREFNRNQRKDSE) shows a compositional bias: basic and acidic residues. S59, S335, and S339 each carry phosphoserine. Residues 356–377 (KALIKQDNLDAFNERDPYKADD) are compositionally biased toward basic and acidic residues. The span at 378–391 (SREEEEENDDDSSL) shows a compositional bias: acidic residues. At S788 the chain carries Phosphoserine. The interval 796 to 837 (DNCLQSVLGQRVDLPEDFQMNYDLWLEREVFSKPISWEELLQ) is required for STRIPAK core complex formation.

The protein belongs to the STRIP family. In terms of assembly, part of the core of STRIPAK complexes composed of PP2A catalytic and scaffolding subunits, the striatins (PP2A regulatory subunits), the striatin-associated proteins MOB4, STRIP1 and STRIP2, PDCD10 and members of the STE20 kinases, such as STK24 and STK26. The STRIPAK complex can be extended by adapter proteins such as SLMAP:SIKE1, CTTNBP2 or CTTNBP2NL. Interacts with CDC42BPB. Interacts with CTTNBP2NL.

It localises to the cytoplasm. Plays a role in the regulation of cell morphology and cytoskeletal organization. Required in the cortical actin filament dynamics and cell shape. Part of the striatin-interacting phosphatase and kinase (STRIPAK) complexes. STRIPAK complexes have critical roles in protein (de)phosphorylation and are regulators of multiple signaling pathways including Hippo, MAPK, nuclear receptor and cytoskeleton remodeling. Different types of STRIPAK complexes are involved in a variety of biological processes such as cell growth, differentiation, apoptosis, metabolism and immune regulation. The chain is Striatin-interacting protein 1 (Strip1) from Mus musculus (Mouse).